We begin with the raw amino-acid sequence, 374 residues long: Chaperone protein DnaJ (374 aa).

The J domain occupies 5–70; the sequence is DYYEILEIER…GKRQLYDRYG (66 aa). The segment at 136-213 adopts a CR-type zinc-finger fold; the sequence is GCKKEIKIRY…CNGKGHENKE (78 aa). Cysteine 149, cysteine 152, cysteine 165, cysteine 168, cysteine 187, cysteine 190, cysteine 201, and cysteine 204 together coordinate Zn(2+). CXXCXGXG motif repeat units lie at residues 149-156, 165-172, 187-194, and 201-208; these read CPDCKGTG, CPDCGGRG, CPKCGGSG, and CPKCNGKG.

It belongs to the DnaJ family. In terms of assembly, homodimer. Requires Zn(2+) as cofactor.

Its subcellular location is the cytoplasm. Participates actively in the response to hyperosmotic and heat shock by preventing the aggregation of stress-denatured proteins and by disaggregating proteins, also in an autonomous, DnaK-independent fashion. Unfolded proteins bind initially to DnaJ; upon interaction with the DnaJ-bound protein, DnaK hydrolyzes its bound ATP, resulting in the formation of a stable complex. GrpE releases ADP from DnaK; ATP binding to DnaK triggers the release of the substrate protein, thus completing the reaction cycle. Several rounds of ATP-dependent interactions between DnaJ, DnaK and GrpE are required for fully efficient folding. Also involved, together with DnaK and GrpE, in the DNA replication of plasmids through activation of initiation proteins. The polypeptide is Chaperone protein DnaJ (Wolinella succinogenes (strain ATCC 29543 / DSM 1740 / CCUG 13145 / JCM 31913 / LMG 7466 / NCTC 11488 / FDC 602W) (Vibrio succinogenes)).